Here is a 436-residue protein sequence, read N- to C-terminus: Protein arginine methyltransferase NDUFAF7, mitochondrial (436 aa).

Residues 1-41 constitute a mitochondrion transit peptide; the sequence is MNALVRRCVARAGLPCIWRGKCYSSGNEPAESNQVTPMLRH. The segment at 411–436 is disordered; it reads GSQERNACQSKTPSSSVAGFDELVWQ. Positions 413–427 are enriched in polar residues; that stretch reads QERNACQSKTPSSSV.

Belongs to the NDUFAF7 family. Interacts with NDUFS2.

It localises to the mitochondrion. The catalysed reaction is L-arginyl-[protein] + 2 S-adenosyl-L-methionine = N(omega),N(omega)'-dimethyl-L-arginyl-[protein] + 2 S-adenosyl-L-homocysteine + 2 H(+). Arginine methyltransferase involved in the assembly or stability of mitochondrial NADH:ubiquinone oxidoreductase complex (complex I). Acts by mediating symmetric dimethylation of 'Arg-118' of NDUFS2 after it assembles into the complex I, stabilizing the early intermediate complex. The chain is Protein arginine methyltransferase NDUFAF7, mitochondrial from Mus musculus (Mouse).